A 239-amino-acid chain; its full sequence is Tetraspanin-9 (239 aa).

The Cytoplasmic portion of the chain corresponds to 1 to 13; that stretch reads MARGCLCCLKYMM. The helical transmembrane segment at 14–34 threads the bilayer; it reads FLFNLIFWLCGCGLLGVGIWL. The Extracellular portion of the chain corresponds to 35-55; the sequence is SVSQGNFATFSPSFPSLSAAN. Residues 56–76 form a helical membrane-spanning segment; it reads LVIAIGTIVMVTGFLGCLGAI. The Cytoplasmic portion of the chain corresponds to 77–85; the sequence is KENKCLLLS. Residues 86–106 form a helical membrane-spanning segment; that stretch reads FFIILLIILLAELILLILFFV. The Extracellular portion of the chain corresponds to 107–203; it reads YMDKVNENAK…VKMWFDDNKH (97 aa). Asparagine 180 is a glycosylation site (N-linked (GlcNAc...) asparagine). The helical transmembrane segment at 204–224 threads the bilayer; that stretch reads VLGTIGMCILIIQILGMAFSM. Topologically, residues 225–239 are cytoplasmic; sequence TLFQQIHRTGKKYDA.

It belongs to the tetraspanin (TM4SF) family.

It localises to the membrane. The protein is Tetraspanin-9 (tspan9) of Xenopus tropicalis (Western clawed frog).